Reading from the N-terminus, the 170-residue chain is Adenine phosphoribosyltransferase (170 aa).

It belongs to the purine/pyrimidine phosphoribosyltransferase family. Homodimer.

It is found in the cytoplasm. The enzyme catalyses AMP + diphosphate = 5-phospho-alpha-D-ribose 1-diphosphate + adenine. Its pathway is purine metabolism; AMP biosynthesis via salvage pathway; AMP from adenine: step 1/1. Functionally, catalyzes a salvage reaction resulting in the formation of AMP, that is energically less costly than de novo synthesis. In Bacillus cereus (strain G9842), this protein is Adenine phosphoribosyltransferase.